The following is a 211-amino-acid chain: LexA repressor (211 aa).

The segment at residues 31-51 is a DNA-binding region (H-T-H motif); that stretch reads RAEISKELGFRSPNAAEEHLK. Active-site for autocatalytic cleavage activity residues include Ser-127 and Lys-164.

The protein belongs to the peptidase S24 family. Homodimer.

It carries out the reaction Hydrolysis of Ala-|-Gly bond in repressor LexA.. In terms of biological role, represses a number of genes involved in the response to DNA damage (SOS response), including recA and lexA. In the presence of single-stranded DNA, RecA interacts with LexA causing an autocatalytic cleavage which disrupts the DNA-binding part of LexA, leading to derepression of the SOS regulon and eventually DNA repair. The sequence is that of LexA repressor from Pasteurella multocida (strain Pm70).